The chain runs to 277 residues: Large ribosomal subunit protein uL2 (277 aa).

Disordered stretches follow at residues 37–60 and 223–264; these read KNSTAGRNNNGHITTRHKGGGHKH and VVMN…NKRT. Positions 39–49 are enriched in polar residues; it reads STAGRNNNGHI. Residues 50–60 show a composition bias toward basic residues; the sequence is TTRHKGGGHKH. Residues 229–244 are compositionally biased toward basic and acidic residues; that stretch reads DHPHGGGEGRTGEARE.

This sequence belongs to the universal ribosomal protein uL2 family. In terms of assembly, part of the 50S ribosomal subunit. Forms a bridge to the 30S subunit in the 70S ribosome.

Functionally, one of the primary rRNA binding proteins. Required for association of the 30S and 50S subunits to form the 70S ribosome, for tRNA binding and peptide bond formation. It has been suggested to have peptidyltransferase activity; this is somewhat controversial. Makes several contacts with the 16S rRNA in the 70S ribosome. This Neisseria gonorrhoeae (strain ATCC 700825 / FA 1090) protein is Large ribosomal subunit protein uL2.